Here is a 180-residue protein sequence, read N- to C-terminus: Centromere protein M (180 aa).

In terms of assembly, component of the CENPA-NAC complex, at least composed of CENPA, CENPC, CENPH, CENPM, CENPN, CENPT and CENPU. The CENPA-NAC complex interacts with the CENPA-CAD complex, composed of CENPI, CENPK, CENPL, CENPO, CENPP, CENPQ, CENPR and CENPS. As to expression, isoform 3 is highly expressed in spleen, and intermediately in heart, prostate and ovary. Isoform 3 is highly expressed in resting CD19 B-cells and B-lineage chronic lymphocytic leukemia (B-CLL) cells and weakly expressed in activated B-cells. Isoform 1 is selectively expressed in activated CD19 cells and weakly in resting CD19 B-cells.

It localises to the nucleus. The protein localises to the cytoplasm. Its subcellular location is the chromosome. The protein resides in the centromere. It is found in the kinetochore. Component of the CENPA-NAC (nucleosome-associated) complex, a complex that plays a central role in assembly of kinetochore proteins, mitotic progression and chromosome segregation. The CENPA-NAC complex recruits the CENPA-CAD (nucleosome distal) complex and may be involved in incorporation of newly synthesized CENPA into centromeres. The polypeptide is Centromere protein M (CENPM) (Homo sapiens (Human)).